The primary structure comprises 122 residues: MIQMQSILEVADNSGAKKVMCIKVLGGSHHMMAKLGDVIVVSIKEAIPGGKVKKGDVYKGVIVRTKTGVVRSDGSTIKFDKNALVLLNKQDEPIGTRVFGPVTRELRAKKYVRIMSLAEEVL.

This sequence belongs to the universal ribosomal protein uL14 family. As to quaternary structure, part of the 50S ribosomal subunit. Forms a cluster with proteins L3 and L19. In the 70S ribosome, L14 and L19 interact and together make contacts with the 16S rRNA in bridges B5 and B8.

Its function is as follows. Binds to 23S rRNA. Forms part of two intersubunit bridges in the 70S ribosome. The protein is Large ribosomal subunit protein uL14 of Rickettsia typhi (strain ATCC VR-144 / Wilmington).